Reading from the N-terminus, the 358-residue chain is Alanine racemase (358 aa).

K35 (proton acceptor; specific for D-alanine) is an active-site residue. N6-(pyridoxal phosphate)lysine is present on K35. A substrate-binding site is contributed by R130. Y255 (proton acceptor; specific for L-alanine) is an active-site residue. A substrate-binding site is contributed by M303.

The protein belongs to the alanine racemase family. Requires pyridoxal 5'-phosphate as cofactor.

The enzyme catalyses L-alanine = D-alanine. The protein operates within amino-acid biosynthesis; D-alanine biosynthesis; D-alanine from L-alanine: step 1/1. Catalyzes the interconversion of L-alanine and D-alanine. May also act on other amino acids. The protein is Alanine racemase (alr) of Shewanella sp. (strain W3-18-1).